The primary structure comprises 162 residues: Large ribosomal subunit protein bL17 (162 aa).

Residues Lys126–Glu162 are disordered. The segment covering Thr146 to Glu155 has biased composition (low complexity).

The protein belongs to the bacterial ribosomal protein bL17 family. In terms of assembly, part of the 50S ribosomal subunit. Contacts protein L32.

This Flavobacterium psychrophilum (strain ATCC 49511 / DSM 21280 / CIP 103535 / JIP02/86) protein is Large ribosomal subunit protein bL17.